Consider the following 210-residue polypeptide: Large ribosomal subunit protein bL25 (210 aa).

The segment covering 191–200 (EAPAEGAAAP) has biased composition (low complexity). The interval 191–210 (EAPAEGAAAPAPAPAKKGKK) is disordered.

Belongs to the bacterial ribosomal protein bL25 family. CTC subfamily. Part of the 50S ribosomal subunit; part of the 5S rRNA/L5/L18/L25 subcomplex. Contacts the 5S rRNA. Binds to the 5S rRNA independently of L5 and L18.

This is one of the proteins that binds to the 5S RNA in the ribosome where it forms part of the central protuberance. This Paracidovorax citrulli (strain AAC00-1) (Acidovorax citrulli) protein is Large ribosomal subunit protein bL25.